The following is a 602-amino-acid chain: 4-hydroxy-3-methylbut-2-en-1-yl diphosphate synthase (flavodoxin) (602 aa).

[4Fe-4S] cluster-binding residues include Cys-508, Cys-511, Cys-543, and Glu-550.

Belongs to the IspG family. [4Fe-4S] cluster is required as a cofactor.

It catalyses the reaction (2E)-4-hydroxy-3-methylbut-2-enyl diphosphate + oxidized [flavodoxin] + H2O + 2 H(+) = 2-C-methyl-D-erythritol 2,4-cyclic diphosphate + reduced [flavodoxin]. It functions in the pathway isoprenoid biosynthesis; isopentenyl diphosphate biosynthesis via DXP pathway; isopentenyl diphosphate from 1-deoxy-D-xylulose 5-phosphate: step 5/6. In terms of biological role, converts 2C-methyl-D-erythritol 2,4-cyclodiphosphate (ME-2,4cPP) into 1-hydroxy-2-methyl-2-(E)-butenyl 4-diphosphate. This is 4-hydroxy-3-methylbut-2-en-1-yl diphosphate synthase (flavodoxin) from Chlamydia trachomatis serovar L2 (strain ATCC VR-902B / DSM 19102 / 434/Bu).